The sequence spans 104 residues: MKVHVRKSDTVVVISGKDKGKTGEVLKVYPKTGKVLVQGINIVKKHQKANKSQVESAIIEREAAINSSKVMLYCNKCKNATRIANKILDDGTKVRVCKKCSETF.

This sequence belongs to the universal ribosomal protein uL24 family. Part of the 50S ribosomal subunit.

Its function is as follows. One of two assembly initiator proteins, it binds directly to the 5'-end of the 23S rRNA, where it nucleates assembly of the 50S subunit. In terms of biological role, one of the proteins that surrounds the polypeptide exit tunnel on the outside of the subunit. The polypeptide is Large ribosomal subunit protein uL24 (Clostridium botulinum (strain Alaska E43 / Type E3)).